The chain runs to 293 residues: Triosephosphate isomerase (293 aa).

25–27 serves as a coordination point for substrate; the sequence is NWK. H117 acts as the Electrophile in catalysis. Catalysis depends on E218, which acts as the Proton acceptor.

Belongs to the triosephosphate isomerase family. In terms of assembly, homodimer.

It is found in the cytoplasm. The catalysed reaction is D-glyceraldehyde 3-phosphate = dihydroxyacetone phosphate. It participates in carbohydrate biosynthesis; gluconeogenesis. The protein operates within carbohydrate degradation; glycolysis; D-glyceraldehyde 3-phosphate from glycerone phosphate: step 1/1. In terms of biological role, involved in the gluconeogenesis. Catalyzes stereospecifically the conversion of dihydroxyacetone phosphate (DHAP) to D-glyceraldehyde-3-phosphate (G3P). The polypeptide is Triosephosphate isomerase (Tropheryma whipplei (strain Twist) (Whipple's bacillus)).